Reading from the N-terminus, the 678-residue chain is Endopolyphosphatase (678 aa).

Residues 1 to 2 (MR) are Cytoplasmic-facing. The chain crosses the membrane as a helical; Signal-anchor for type II membrane protein span at residues 3 to 23 (SPLLASLFALALSIASSEAAI). The Vacuolar segment spans residues 24-678 (SSTEQVPLSG…ELMLVSTETD (655 aa)). The interval 70-109 (YKTGSTFDSGCHRKPKKDGKSEGKKATENERGNEDLDDKE) is disordered. Residues 87-103 (DGKSEGKKATENERGNE) show a composition bias toward basic and acidic residues. Residues N138, N369, and N447 are each glycosylated (N-linked (GlcNAc...) asparagine). The segment at 504–547 (KGSGGHRHDVPKGDCSLPSNEDKPHCTFKRKPRHYSKRSPSRTN) is disordered. The span at 529–543 (CTFKRKPRHYSKRSP) shows a compositional bias: basic residues. N-linked (GlcNAc...) asparagine glycosylation is found at N591 and N616.

The protein belongs to the endopolyphosphatase PPN1 family. A divalent metal cation serves as cofactor. In terms of processing, processing by proteases in the vacuole may be required for activation.

The protein localises to the vacuole membrane. The enzyme catalyses [phosphate](n+1) + n H2O = (n+1) phosphate + n H(+). Its function is as follows. Catalyzes the hydrolysis of inorganic polyphosphate (polyP) chains of many hundreds of phosphate residues into shorter lengths. This chain is Endopolyphosphatase (PPN1), found in Cryptococcus neoformans var. neoformans serotype D (strain JEC21 / ATCC MYA-565) (Filobasidiella neoformans).